The primary structure comprises 527 residues: Peptide chain release factor 3 (527 aa).

Residues 9 to 277 form the tr-type G domain; sequence AKRRTFAIIS…CIVDWAPQPL (269 aa). Residues 18 to 25, 86 to 90, and 140 to 143 each bind GTP; these read SHPDAGKT, DTPGH, and NKLD.

Belongs to the TRAFAC class translation factor GTPase superfamily. Classic translation factor GTPase family. PrfC subfamily.

The protein localises to the cytoplasm. Increases the formation of ribosomal termination complexes and stimulates activities of RF-1 and RF-2. It binds guanine nucleotides and has strong preference for UGA stop codons. It may interact directly with the ribosome. The stimulation of RF-1 and RF-2 is significantly reduced by GTP and GDP, but not by GMP. This Pseudomonas paraeruginosa (strain DSM 24068 / PA7) (Pseudomonas aeruginosa (strain PA7)) protein is Peptide chain release factor 3.